The sequence spans 41 residues: Iota-conotoxin-like r11d (41 aa).

Disulfide bonds link Cys-2-Cys-16, Cys-9-Cys-19, Cys-15-Cys-24, and Cys-18-Cys-35. Pro-8 carries the post-translational modification 4-hydroxyproline. Pro-26 is modified (4-hydroxyproline).

Post-translationally, position 41 corresponds to a L-threonine, and not a D-threonine as firstly supposed. In terms of tissue distribution, expressed by the venom duct.

The protein localises to the secreted. Iota-conotoxins bind to voltage-gated sodium channels (Nav) and act as agonists by shifting the voltage-dependence of activation to more hyperpolarized levels. Both natural (L-Thr form) and synthetic (D-Thr form) peptides cause paralysis and death following intracranial injection and grooming and hypersensitivity upon intraperitoneal injection into mice. The L-Thr form of the peptide is 7-fold more potent than the D-Thr form. Both natural peptide (L-Thr form) and synthetic peptide (D-Thr form) are active on nerve, and on muscle. This chain is Iota-conotoxin-like r11d, found in Conus radiatus (Rayed cone).